Reading from the N-terminus, the 288-residue chain is Bifunctional protein FolD (288 aa).

NADP(+)-binding positions include 171–173, Ser-196, and Thr-237; that span reads GRS.

This sequence belongs to the tetrahydrofolate dehydrogenase/cyclohydrolase family. Homodimer.

It carries out the reaction (6R)-5,10-methylene-5,6,7,8-tetrahydrofolate + NADP(+) = (6R)-5,10-methenyltetrahydrofolate + NADPH. The enzyme catalyses (6R)-5,10-methenyltetrahydrofolate + H2O = (6R)-10-formyltetrahydrofolate + H(+). It functions in the pathway one-carbon metabolism; tetrahydrofolate interconversion. Its function is as follows. Catalyzes the oxidation of 5,10-methylenetetrahydrofolate to 5,10-methenyltetrahydrofolate and then the hydrolysis of 5,10-methenyltetrahydrofolate to 10-formyltetrahydrofolate. This Elusimicrobium minutum (strain Pei191) protein is Bifunctional protein FolD.